A 605-amino-acid polypeptide reads, in one-letter code: Elongation factor 4 (605 aa).

The region spanning 9-192 (SRTRNFCIIA…AIIARIPSPK (184 aa)) is the tr-type G domain. Residues 21–26 (DHGKST) and 139–142 (NKID) each bind GTP.

This sequence belongs to the TRAFAC class translation factor GTPase superfamily. Classic translation factor GTPase family. LepA subfamily.

The protein resides in the cell inner membrane. The catalysed reaction is GTP + H2O = GDP + phosphate + H(+). Its function is as follows. Required for accurate and efficient protein synthesis under certain stress conditions. May act as a fidelity factor of the translation reaction, by catalyzing a one-codon backward translocation of tRNAs on improperly translocated ribosomes. Back-translocation proceeds from a post-translocation (POST) complex to a pre-translocation (PRE) complex, thus giving elongation factor G a second chance to translocate the tRNAs correctly. Binds to ribosomes in a GTP-dependent manner. This is Elongation factor 4 from Chlorobium limicola (strain DSM 245 / NBRC 103803 / 6330).